The chain runs to 512 residues: Hyaluronidase PH-20 (512 aa).

An N-terminal signal peptide occupies residues 1-35 (MGELQFKWLFWRSFAESGGTFQTVLIFLFIPYSLT). Disulfide bonds link Cys60-Cys351 and Cys223-Cys237. Asn63 is a glycosylation site (N-linked (GlcNAc...) asparagine). The active-site Proton donor is the Glu147. Asn165 and Asn179 each carry an N-linked (GlcNAc...) asparagine glycan. N-linked (GlcNAc...) asparagine glycosylation is present at Asn368. 3 disulfide bridges follow: Cys376–Cys387, Cys381–Cys435, and Cys437–Cys464. The N-linked (GlcNAc...) asparagine glycan is linked to Asn408.

The protein belongs to the glycosyl hydrolase 56 family.

The protein resides in the cell membrane. It catalyses the reaction Random hydrolysis of (1-&gt;4)-linkages between N-acetyl-beta-D-glucosamine and D-glucuronate residues in hyaluronate.. Functionally, involved in sperm-egg adhesion. Upon fertilization sperm must first penetrate a layer of cumulus cells that surrounds the egg before reaching the zona pellucida. The cumulus cells are embedded in a matrix containing hyaluronic acid which is formed prior to ovulation. This protein aids in penetrating the layer of cumulus cells by digesting hyaluronic acid. The polypeptide is Hyaluronidase PH-20 (Spam1) (Rattus norvegicus (Rat)).